A 278-amino-acid chain; its full sequence is Casein kinase II subunit beta (278 aa).

Disordered stretches follow at residues 1–22 (MSQE…DSGA) and 78–111 (DEEE…RNKS). Serine 2 carries the N-acetylserine modification. A Phosphoserine modification is found at serine 2. Residues 78–94 (DEEEDEDDVVEEDEVDQ) are compositionally biased toward acidic residues.

It belongs to the casein kinase 2 subunit beta family. Tetramer composed of an alpha subunit, an alpha' subunit, one beta subunit and one beta' subunit. Interacts with FACT subunits POB3 and SPT16. interacts with YTA7. In terms of processing, phosphorylated by alpha subunit.

Regulatory subunit of casein kinase II/CK2. As part of the kinase complex regulates the basal catalytic activity of the alpha subunit a constitutively active serine/threonine-protein kinase that phosphorylates a large number of substrates containing acidic residues C-terminal to the phosphorylated serine or threonine. This Saccharomyces cerevisiae (strain ATCC 204508 / S288c) (Baker's yeast) protein is Casein kinase II subunit beta (CKB1).